The sequence spans 499 residues: Patatin-like protein 6 (499 aa).

One can recognise a PNPLA domain in the interval Leu-111–Ile-314. A GGXR motif is present at residues Gly-116–Arg-119. The Nucleophile role is filled by Ser-155. Asp-301 serves as the catalytic Proton acceptor. A DGA/G motif is present at residues Asp-301 to Gly-303.

Belongs to the patatin family. In terms of tissue distribution, highly expressed in siliques and at lower levels in roots and flowers.

Its function is as follows. Possesses non-specific lipolytic acyl hydrolase (LAH) activity. Hydrolyzes phospholipids as well as galactolipids. May play a role in disease resistance. This is Patatin-like protein 6 (PLP6) from Arabidopsis thaliana (Mouse-ear cress).